Reading from the N-terminus, the 495-residue chain is Tripartite motif-containing protein 5 (495 aa).

Alanine 2 carries the N-acetylalanine modification. The segment at 15–60 adopts an RING-type zinc-finger fold; sequence CPICLELLTEPLSLHCGHSFCQACITANHKKSMLYKEGERSCPVCR. The residue at position 87 (serine 87) is a Phosphoserine. The B box-type zinc-finger motif lies at 92–133; that stretch reads QKVDHCARHGEKLLLFCQEDSKVICWLCERSQEHRGHHTFLM. Positions 97, 100, 119, and 125 each coordinate Zn(2+). The stretch at 137–223 forms a coiled coil; sequence AQEYHVKLQT…KSLTKSETKM (87 aa). Residues 187–200 form a required for interaction with GABARAP and for autophagy region; the sequence is FEQLREILDREESN. The B30.2/SPRY domain occupies 283-495; it reads LKGMLDMFRE…VPMTLCSPSS (213 aa).

The protein belongs to the TRIM/RBCC family. In terms of assembly, can form homodimers and homotrimers. In addition to lower-order dimerization, also exhibits a higher-order multimerization and both low- and high-order multimerizations are essential for its restriction activity. Interacts with BTBD1 and BTBD2. Interacts with PSMC4, PSMC5, PSMD7 and HSPA8/HSC70. Interacts (via B30.2/SPRY domain) with HSPA1A/B. Interacts with PSMC2, MAP3K7/TAK1, TAB2 and TAB3. Interacts with SQSTM1. Interacts with TRIM6 and TRIM34. Interacts with ULK1 (phosphorylated form), GABARAP, GABARAPL1, GABARAPL2, MAP1LC3A, MAP1LC3C and BECN1. In terms of processing, degraded in a proteasome-independent fashion in the absence of viral infection but in a proteasome-dependent fashion following exposure to restriction sensitive virus. Autoubiquitinated in a RING finger- and UBE2D2-dependent manner. Monoubiquitinated by TRIM21. Deubiquitinated by Yersinia YopJ. Ubiquitination may not lead to proteasomal degradation.

It is found in the cytoplasm. Its subcellular location is the nucleus. It catalyses the reaction S-ubiquitinyl-[E2 ubiquitin-conjugating enzyme]-L-cysteine + [acceptor protein]-L-lysine = [E2 ubiquitin-conjugating enzyme]-L-cysteine + N(6)-ubiquitinyl-[acceptor protein]-L-lysine.. Its pathway is protein modification; protein ubiquitination. Functionally, capsid-specific restriction factor that prevents infection from non-host-adapted retroviruses. Blocks viral replication early in the life cycle, after viral entry but before reverse transcription. In addition to acting as a capsid-specific restriction factor, also acts as a pattern recognition receptor that activates innate immune signaling in response to the retroviral capsid lattice. Binding to the viral capsid triggers its E3 ubiquitin ligase activity, and in concert with the heterodimeric ubiquitin conjugating enzyme complex UBE2V1-UBE2N (also known as UBC13-UEV1A complex) generates 'Lys-63'-linked polyubiquitin chains, which in turn are catalysts in the autophosphorylation of the MAP3K7/TAK1 complex (includes TAK1, TAB2, and TAB3). Activation of the MAP3K7/TAK1 complex by autophosphorylation results in the induction and expression of NF-kappa-B and MAPK-responsive inflammatory genes, thereby leading to an innate immune response in the infected cell. Plays a role in regulating autophagy through activation of autophagy regulator BECN1 by causing its dissociation from its inhibitors BCL2 and TAB2. The polypeptide is Tripartite motif-containing protein 5 (TRIM5) (Macaca nemestrina (Pig-tailed macaque)).